The primary structure comprises 246 residues: 1-(5-phosphoribosyl)-5-[(5-phosphoribosylamino)methylideneamino] imidazole-4-carboxamide isomerase (246 aa).

Aspartate 8 serves as the catalytic Proton acceptor. The active-site Proton donor is aspartate 131.

Belongs to the HisA/HisF family.

The protein resides in the cytoplasm. It catalyses the reaction 1-(5-phospho-beta-D-ribosyl)-5-[(5-phospho-beta-D-ribosylamino)methylideneamino]imidazole-4-carboxamide = 5-[(5-phospho-1-deoxy-D-ribulos-1-ylimino)methylamino]-1-(5-phospho-beta-D-ribosyl)imidazole-4-carboxamide. The protein operates within amino-acid biosynthesis; L-histidine biosynthesis; L-histidine from 5-phospho-alpha-D-ribose 1-diphosphate: step 4/9. The polypeptide is 1-(5-phosphoribosyl)-5-[(5-phosphoribosylamino)methylideneamino] imidazole-4-carboxamide isomerase (Lactococcus lactis subsp. cremoris (strain MG1363)).